The following is a 305-amino-acid chain: Tyrosine recombinase XerC (305 aa).

The Core-binding (CB) domain occupies 4–95; it reads TSIQALINKW…AVKNFYRFLE (92 aa). One can recognise a Tyr recombinase domain in the interval 116 to 298; sequence LLPKALSEDD…SIKHLEAVYT (183 aa). Catalysis depends on residues arginine 159, lysine 182, histidine 250, arginine 253, and histidine 276. Tyrosine 285 serves as the catalytic O-(3'-phospho-DNA)-tyrosine intermediate.

It belongs to the 'phage' integrase family. XerC subfamily. As to quaternary structure, forms a cyclic heterotetrameric complex composed of two molecules of XerC and two molecules of XerD.

Its subcellular location is the cytoplasm. Functionally, site-specific tyrosine recombinase, which acts by catalyzing the cutting and rejoining of the recombining DNA molecules. The XerC-XerD complex is essential to convert dimers of the bacterial chromosome into monomers to permit their segregation at cell division. It also contributes to the segregational stability of plasmids. In Rickettsia massiliae (strain Mtu5), this protein is Tyrosine recombinase XerC.